We begin with the raw amino-acid sequence, 123 residues long: Small ribosomal subunit protein uS12cz/uS12cy (123 aa).

It belongs to the universal ribosomal protein uS12 family. Part of the 30S ribosomal subunit.

The protein localises to the plastid. Its subcellular location is the chloroplast. Functionally, with S4 and S5 plays an important role in translational accuracy. Located at the interface of the 30S and 50S subunits. In Cucumis sativus (Cucumber), this protein is Small ribosomal subunit protein uS12cz/uS12cy (rps12-A).